The primary structure comprises 151 residues: Type 4 adapter protein IcmW (151 aa).

The T4BSS is a complex nanomachine composed of several subcomplexes. This subunit is part of the Type IV Coupling Complex (T4CC), a subcomplex composed of the DotLMNYZ core and the IcmSW-LvgA adapter subunits, linked by the C-terminal tail of DotL. Interacts with IcmS. IcmS and IcmW form a stable complex. Interaction with IcmS greatly enhances the stability of IcmW. Interacts directly with the type 4 coupling protein DotL. Interacts with LvgA. Interacts with effector proteins.

Its subcellular location is the cytoplasm. Interaction with DotL is critical for the export of IcmSW-dependent substrates. In terms of biological role, component of the Dot/Icm type IVB secretion system (T4BSS), which is used to inject bacterial effector proteins into eukaryotic host cells. Part of a subcomplex which recruits effector proteins and delivers them to the core transmembrane subcomplex. The IcmS/IcmW protein complex plays an important role in protein translocation by interacting with multiple Dot/Icm effector proteins to facilitate their translocation into host cells. Interaction promotes conformational changes in the effector protein, which may facilitate display of a C-terminal translocation signal. May maintain the substrates in a translocation competent form. Required for intracellular growth in host cells, replicative phagosome formation and phagosome trafficking. This chain is Type 4 adapter protein IcmW, found in Legionella pneumophila subsp. pneumophila (strain Philadelphia 1 / ATCC 33152 / DSM 7513).